The following is a 147-amino-acid chain: Auxin-responsive protein SAUR41 (147 aa).

Belongs to the ARG7 family. In terms of tissue distribution, specifically expressed in the quiescent center and cortex or endodermis initials of root stem niches. Expressed in vascular tissues from hypocotyls, petioles and cotyledons.

The protein localises to the cytoplasm. Functionally, plays a role in the regulation of cell expansion, root meristem patterning and auxin transport. In Arabidopsis thaliana (Mouse-ear cress), this protein is Auxin-responsive protein SAUR41.